The following is a 342-amino-acid chain: Glucokinase (342 aa).

ATP is bound at residue 7-12 (GDIGGT).

This sequence belongs to the bacterial glucokinase family.

It is found in the cytoplasm. The catalysed reaction is D-glucose + ATP = D-glucose 6-phosphate + ADP + H(+). In Trichormus variabilis (strain ATCC 29413 / PCC 7937) (Anabaena variabilis), this protein is Glucokinase.